The chain runs to 440 residues: Indoleamine 2,3-dioxygenase qulI (440 aa).

H347 is a heme binding site.

The protein belongs to the indoleamine 2,3-dioxygenase family. In terms of assembly, monomer. It depends on heme as a cofactor.

The enzyme catalyses D-tryptophan + O2 = N-formyl-D-kynurenine. It catalyses the reaction L-tryptophan + O2 = N-formyl-L-kynurenine. It functions in the pathway secondary metabolite biosynthesis. Indoleamine 2,3-dioxygenase; part of the gene cluster that mediates the biosynthesis of quinolactacin A2 (QUL A2), a fungal alkaloid that features a quinolone-gamma-lactam hybrid, which is a potential pharmacophore for the treatment of cancer and Alzheimer's disease. The quinolone-gamma-lactam hybrid scaffold is synthesized from the combination of L-isoleucine (L-Ile) and the nonproteinogenic amino acid L-kynurenine, followed by quinolone cyclization, oxidative decarboxylation, and lactam formation. Additionally, the N-methyl group is derived from methionine, which might be catalyzed by an S-adenosylmethionine (SAM)-dependent methyltransferase. Bioconversion of L-tryptophan to L-kynurenine could be catalyzed by the indoleamine-2,3-dioxygenase (IDO) qulI to produce an unstable product, N-formyl-L-kynurenine, followed by kynurenine formamidase catalyzed hydrolysis. QulM then acts as a methyltransferase that methylates L-kynurenine at the N-4 position. The FMN-dependent alpha-hydroxy acid dehydrogenase qulF than functions as an oxidative decarboxylase which converts N-methylkynurenine into 2-aminobenzoylacetamide via 2 tandem reactions, including dehydrogenation and decarboxylation. An amidase located outside of the qul gene cluster further produces the unstable beta-keto acid precursor N-methyl-2-aminobenzoylacetate, which could be spontaneously dehydrated to form N-methyl-4-hydroxy-2-quinolone. The NRPS qulB is able to incorporate N-methyl-2-aminobenzoylacetate and efficiently compete with the spontaneous reaction. By further extending the beta-keto acid with L-Ile, qulA performs a Dieckmann condensation to form the gamma-lactam ring and release a 4-ketopyrrolidinone intermediate from the assembly line. This intermediate could plausibly further undergo a spontaneous cyclization to yield the final quinolone-gamma-lactam hybrid structure. The chain is Indoleamine 2,3-dioxygenase qulI from Penicillium citrinum.